The sequence spans 268 residues: uncharacterized protein (268 aa).

The protein to M.tuberculosis Rv0025 and Rv0026.

This is an uncharacterized protein from Mycobacterium tuberculosis (strain CDC 1551 / Oshkosh).